The following is a 208-amino-acid chain: Proheparin-binding EGF-like growth factor (208 aa).

The N-terminal stretch at 1–19 is a signal peptide; the sequence is MKLLPSVVLKLLLAAVLSA. Residues 20–62 constitute a propeptide that is removed on maturation; the sequence is LVTGESLEQLRRGLAAGTSNPDPSTGSTDQLLRLGGGRDRKVR. Residues 20 to 160 lie on the Extracellular side of the membrane; it reads LVTGESLEQL…ENRLYTYDHT (141 aa). A disordered region spans residues 34–55; that stretch reads AAGTSNPDPSTGSTDQLLRLGG. Positions 36-49 are enriched in polar residues; the sequence is GTSNPDPSTGSTDQ. 2 O-linked (GalNAc...) threonine glycosylation sites follow: T75 and T85. The tract at residues 81–104 is disordered; the sequence is QALATPSKEEHGKRKKKGKGLGKK. Positions 93–102 are enriched in basic residues; the sequence is KRKKKGKGLG. One can recognise an EGF-like domain in the interval 104-144; the sequence is KRDPCLRKYKDFCIHGECKYVKELRAPSCICHPGYHGERCH. 3 cysteine pairs are disulfide-bonded: C108-C121, C116-C132, and C134-C143. Residues 136–148 form a toxin-binding domain region; that stretch reads PGYHGERCHGLSL. The propeptide at 149–208 is C-terminal; that stretch reads PVENRLYTYDHTTILAVVAVVLSSVCLLVIVGLLMFRYHRRGGYDVENEEKVKLGMTNSH. Residues 161–184 traverse the membrane as a helical segment; that stretch reads TILAVVAVVLSSVCLLVIVGLLMF. Residues 185-208 are Cytoplasmic-facing; sequence RYHRRGGYDVENEEKVKLGMTNSH.

Interacts with EGFR and ERBB4. Interacts with FBLN1. O-glycosylated.

Its subcellular location is the secreted. The protein resides in the extracellular space. The protein localises to the cell membrane. In terms of biological role, growth factor that mediates its effects via EGFR, ERBB2 and ERBB4. Required for normal cardiac valve formation and normal heart function. Promotes smooth muscle cell proliferation. May be involved in macrophage-mediated cellular proliferation. It is mitogenic for fibroblasts, but not endothelial cells. It is able to bind EGF receptor/EGFR with higher affinity than EGF itself and is a far more potent mitogen for smooth muscle cells than EGF. Also acts as a diphtheria toxin receptor. The protein is Proheparin-binding EGF-like growth factor (HBEGF) of Chlorocebus aethiops (Green monkey).